The primary structure comprises 426 residues: GTPase HflX (426 aa).

The Hflx-type G domain occupies 198-365 (PTVSLVGYTN…ALTERLSGEV (168 aa)). GTP is bound by residues 204 to 211 (GYTNAGKS), 229 to 233 (FATLD), 251 to 254 (DTVG), 317 to 320 (NKID), and 343 to 345 (SAQ). Residues Ser211 and Thr231 each coordinate Mg(2+).

Belongs to the TRAFAC class OBG-HflX-like GTPase superfamily. HflX GTPase family. As to quaternary structure, monomer. Associates with the 50S ribosomal subunit. This interaction occurs in the presence of GTP, GDP, ATP or ADP, but not in their absence. Requires Mg(2+) as cofactor.

It is found in the cytoplasm. With respect to regulation, intrinsic GTPase activity is very slow and can be stimulated by the presence of 50S ribosomal subunits or 70S ribosomes. GTPase activity is inhibited by ATP. Functionally, GTPase that associates with the 50S ribosomal subunit and may have a role during protein synthesis or ribosome biogenesis. In vitro, also exhibits ATPase activity. The sequence is that of GTPase HflX from Escherichia coli (strain K12).